The chain runs to 391 residues: MCRGLSAVLILLVSLSAQLHVVVGEEAPKPEKEICGLKVGRLLDSVKGWLSVSQQEKCPLNKYCENKIQADQYNLVPLTCIRWRSLNPASPTGSLGGKDVVSKIDAAMSNFKTLFEPMKADLAKLEEEVKRQVLDAWKALEPLQKEVYRSTLASGRIERAVFYSFMEMGDNVKLDNYFQPANVEELLKYAWALPMHKKQRSMYDLIGQLVQSSKSPMLQTLHAVELATVVNPELENRENLLNDQVVQLRDNLYKNSFATLVSIARHFPDHFDTLRQRLFKLPDGSKPGADTLPNIVNFIAQLPSDELRLSSVDLLLQSLTAENGTLVQDPEYVYRLSQLAHAMPSLVDVKAHPDLQQSVDDLMAKFNTPIDGKTLQYFQNIGISPSSSVAT.

An N-terminal signal peptide occupies residues 1–24 (MCRGLSAVLILLVSLSAQLHVVVG). Residue asparagine 323 is glycosylated (N-linked (GlcNAc...) asparagine).

Female salivary gland (at protein level). Female saliva (at protein level). Not detected in female midgut, head and carcass (at protein level). Not detected in male tissues (at protein level).

Its subcellular location is the secreted. Its function is as follows. Required for efficient probing on a mammalian host. Alters the local inflammatory response in the host skin following a mosquito bite by suppressing TNF-alpha/TNF expression. Functionally, (Microbial infection) Contributes to optimal transmission of Plasmodium berghei sporozoites to mice. (Microbial infection) Contributes to optimal transmission of Plasmodium falciparum sporozoites to mammalian host. The sequence is that of Salivary protein TRIO from Anopheles gambiae (African malaria mosquito).